Reading from the N-terminus, the 238-residue chain is Probable transcriptional regulatory protein YeeN (238 aa).

Belongs to the TACO1 family. YeeN subfamily.

The protein localises to the cytoplasm. This chain is Probable transcriptional regulatory protein YeeN, found in Salmonella typhimurium (strain LT2 / SGSC1412 / ATCC 700720).